We begin with the raw amino-acid sequence, 599 residues long: Elongation factor 4 (599 aa).

The tr-type G domain occupies 4 to 186 (SKIRNFSIIA…SIVEKVPAPK (183 aa)). Residues 16–21 (DHGKST) and 133–136 (NKVD) each bind GTP.

This sequence belongs to the TRAFAC class translation factor GTPase superfamily. Classic translation factor GTPase family. LepA subfamily.

It localises to the cell inner membrane. The catalysed reaction is GTP + H2O = GDP + phosphate + H(+). Functionally, required for accurate and efficient protein synthesis under certain stress conditions. May act as a fidelity factor of the translation reaction, by catalyzing a one-codon backward translocation of tRNAs on improperly translocated ribosomes. Back-translocation proceeds from a post-translocation (POST) complex to a pre-translocation (PRE) complex, thus giving elongation factor G a second chance to translocate the tRNAs correctly. Binds to ribosomes in a GTP-dependent manner. This Syntrophotalea carbinolica (strain DSM 2380 / NBRC 103641 / GraBd1) (Pelobacter carbinolicus) protein is Elongation factor 4.